A 238-amino-acid chain; its full sequence is Demethylmenaquinone methyltransferase (238 aa).

Residues Thr60, Asp81, and 108-109 each bind S-adenosyl-L-methionine; that span reads NA.

This sequence belongs to the class I-like SAM-binding methyltransferase superfamily. MenG/UbiE family.

The catalysed reaction is a 2-demethylmenaquinol + S-adenosyl-L-methionine = a menaquinol + S-adenosyl-L-homocysteine + H(+). Its pathway is quinol/quinone metabolism; menaquinone biosynthesis; menaquinol from 1,4-dihydroxy-2-naphthoate: step 2/2. In terms of biological role, methyltransferase required for the conversion of demethylmenaquinol (DMKH2) to menaquinol (MKH2). The protein is Demethylmenaquinone methyltransferase of Oceanobacillus iheyensis (strain DSM 14371 / CIP 107618 / JCM 11309 / KCTC 3954 / HTE831).